Consider the following 490-residue polypeptide: 7-ethoxycoumarin O-deethylase (490 aa).

Residue cysteine 432 coordinates heme.

Belongs to the cytochrome P450 family. It depends on heme as a cofactor.

Its function is as follows. Capable of dealkylating a model xenobiotic compound, 7-ethoxycoumarin. Metabolizes with high efficiency a wide range of xenobiotics, including alkoxycoumarins, alkoxyresorufins, and several herbicides of the class of phenylureas. Catalyzes the double N-dealkylation (oxidative N-demethylation) of phenylureas such as chlortoluron and isoproturon with turnover rates comparable to those reported for physiological substrates and produces non-phytotoxic compounds. Could be used for control of herbicide tolerance and selectivity, as well as soil and groundwater bioremediation. This chain is 7-ethoxycoumarin O-deethylase (CYP76B1), found in Helianthus tuberosus (Jerusalem artichoke).